A 554-amino-acid polypeptide reads, in one-letter code: Flavin-dependent halogenase ascD (554 aa).

Residues G15, G18, and E48 each coordinate FAD. The chloride site is built by S331 and G332. Residue V333 participates in FAD binding.

Belongs to the flavin-dependent halogenase family.

It catalyses the reaction ilicicolin B + FADH2 + chloride + O2 = ilicicolin A + FAD + 2 H2O + H(+). It participates in secondary metabolite biosynthesis; terpenoid biosynthesis. Flavin-dependent halogenase; part of the asc-1 gene cluster that mediates the biosynthesis of both ascochlorin and ascofuranone, a strong inhibitor of cyanide-insensitive alternative oxidases and a promising drug candidate against African trypanosomiasis. The first step in the pathway is performed by the non-reducing polyketide synthase ascC that produces orsellinic acid by condensing acetyl-CoA with 3 malonyl-CoA units. Orsellinic acid is then prenylated by the prenyltransferase ascA to yield ilicicolinic acid B. Ilicicolinic acid B is further reduced to ilicicolin B by the reductase ascB. The halogenase ascD then chlorinates ilicicolin B to produce ilicicolin A which is converted to ilicicolin A epoxide by the cytochrome P450 monooxygenase ascE that catalyzes stereoselective epoxidation of the terminal double bond of the prenyl group. Ilicicolin A epoxide is the last common precursor for the biosynthesis of ascofuranone and ascochlorin. The terpene cyclase ascF produces a monocyclic terpene, and the cyclization reaction is proposed to be initiated by protonation of the terminal epoxide of ilicicolin A epoxide to generate a monocyclic tertiarycation, which is followed by a series of hydride and methyl shifts with abstraction of proton, leading to the formation of the (14S,15R,19R)-trimethylcyclohexanone ring structure of ilicicolin C, which is finally reduced to ascochlorin by the dehydrogenase ascG. On the other hand, ilicicolin A epoxide is hydroxylated by the cytochrome P450 monooxygenase ascH, and the resultant product is cyclized by the terpene cyclase ascI to ascofuranol via protonation-initiated epoxide ring opening, which facilitates the 6-endo-tet cyclization to form the tetrahy-drofuran ring. Finally, ascofuranol is oxidized into ascofuranone by ascJ. The sequence is that of Flavin-dependent halogenase ascD from Acremonium egyptiacum (Oospora egyptiaca).